We begin with the raw amino-acid sequence, 189 residues long: Potassium-transporting ATPase KdpC subunit (189 aa).

A helical membrane pass occupies residues Pro-6–Val-26.

The protein belongs to the KdpC family. The system is composed of three essential subunits: KdpA, KdpB and KdpC.

It localises to the cell inner membrane. Functionally, part of the high-affinity ATP-driven potassium transport (or Kdp) system, which catalyzes the hydrolysis of ATP coupled with the electrogenic transport of potassium into the cytoplasm. This subunit acts as a catalytic chaperone that increases the ATP-binding affinity of the ATP-hydrolyzing subunit KdpB by the formation of a transient KdpB/KdpC/ATP ternary complex. This is Potassium-transporting ATPase KdpC subunit from Geobacter metallireducens (strain ATCC 53774 / DSM 7210 / GS-15).